Reading from the N-terminus, the 440-residue chain is MQLTTSQQMQTNFLTTNKHHLLKYTNGLIWCWWLFVISLVLASSTFRGFFLGTINIVNFVFWILALIFGVAVAFINGVLSSELKENSVFQEEQKRFFLGFFFPQMAFCNALWLKLKLSYLNSERENLLEKIKQKLKKLTLSVFVVWGIYCVLATSIYLPNALRILNIYQIPNLIALINNRLSEILPDGNRYFLGHSSFAFHYYEIVSRIPFLVFFIIPTITLITLGCYLFAYLRFINSNKLRKPLSTLSIVIMLTDVVGIIQWIIIDILLIWLNVPFVIFVIFWVIKLVLPLAMIGTFVSSLTIYKKVTSKEWLAIKEEQINLTTMNININMGEQSSKNMNSFENHESNERNSLQIYQQHSSMMSETKRKQSSLSYDARILLPKSPYNTKKTLFLIIFFSIISLILATIGSVFISFAIVQISIPFYVIGGVIWFFTFISL.

A run of 10 helical transmembrane segments spans residues 26–46 (NGLI…SSTF), 59–79 (FVFW…NGVL), 96–116 (FFLG…LKLK), 138–158 (LTLS…SIYL), 211–231 (FLVF…YLFA), 241–261 (LRKP…VGII), 263–283 (WIII…FVIF), 284–304 (WVIK…SLTI), 394–414 (FLII…SVFI), and 418–438 (IVQI…FTFI).

To M.pneumoniae MPN_087.

It localises to the cell membrane. This is an uncharacterized protein from Mycoplasma pneumoniae (strain ATCC 29342 / M129 / Subtype 1) (Mycoplasmoides pneumoniae).